A 338-amino-acid polypeptide reads, in one-letter code: RNA 3'-terminal phosphate cyclase (338 aa).

ATP contacts are provided by residues glutamine 103 and 283–287 (YLADQ). Histidine 308 functions as the Tele-AMP-histidine intermediate in the catalytic mechanism.

The protein belongs to the RNA 3'-terminal cyclase family. Type 1 subfamily.

Its subcellular location is the cytoplasm. The enzyme catalyses a 3'-end 3'-phospho-ribonucleotide-RNA + ATP = a 3'-end 2',3'-cyclophospho-ribonucleotide-RNA + AMP + diphosphate. Functionally, catalyzes the conversion of 3'-phosphate to a 2',3'-cyclic phosphodiester at the end of RNA. The mechanism of action of the enzyme occurs in 3 steps: (A) adenylation of the enzyme by ATP; (B) transfer of adenylate to an RNA-N3'P to produce RNA-N3'PP5'A; (C) and attack of the adjacent 2'-hydroxyl on the 3'-phosphorus in the diester linkage to produce the cyclic end product. The biological role of this enzyme is unknown but it is likely to function in some aspects of cellular RNA processing. This Escherichia coli O127:H6 (strain E2348/69 / EPEC) protein is RNA 3'-terminal phosphate cyclase.